A 195-amino-acid polypeptide reads, in one-letter code: Imidazoleglycerol-phosphate dehydratase (195 aa).

This sequence belongs to the imidazoleglycerol-phosphate dehydratase family.

It is found in the cytoplasm. The catalysed reaction is D-erythro-1-(imidazol-4-yl)glycerol 3-phosphate = 3-(imidazol-4-yl)-2-oxopropyl phosphate + H2O. It functions in the pathway amino-acid biosynthesis; L-histidine biosynthesis; L-histidine from 5-phospho-alpha-D-ribose 1-diphosphate: step 6/9. This chain is Imidazoleglycerol-phosphate dehydratase, found in Methylobacterium radiotolerans (strain ATCC 27329 / DSM 1819 / JCM 2831 / NBRC 15690 / NCIMB 10815 / 0-1).